Consider the following 591-residue polypeptide: Aspartate--tRNA ligase (591 aa).

Position 171 (Glu-171) interacts with L-aspartate. The aspartate stretch occupies residues 195-198 (QLFK). An L-aspartate-binding site is contributed by Arg-217. ATP-binding positions include 217–219 (RDE) and Gln-226. His-448 lines the L-aspartate pocket. An ATP-binding site is contributed by Glu-482. Arg-489 is an L-aspartate binding site. 534–537 (GLDR) is an ATP binding site.

It belongs to the class-II aminoacyl-tRNA synthetase family. Type 1 subfamily. As to quaternary structure, homodimer.

It localises to the cytoplasm. The enzyme catalyses tRNA(Asp) + L-aspartate + ATP = L-aspartyl-tRNA(Asp) + AMP + diphosphate. Its function is as follows. Catalyzes the attachment of L-aspartate to tRNA(Asp) in a two-step reaction: L-aspartate is first activated by ATP to form Asp-AMP and then transferred to the acceptor end of tRNA(Asp). This is Aspartate--tRNA ligase from Aliivibrio salmonicida (strain LFI1238) (Vibrio salmonicida (strain LFI1238)).